The chain runs to 1116 residues: Electrogenic sodium bicarbonate cotransporter 4 (1116 aa).

The span at 1–14 shows a compositional bias: basic and acidic residues; sequence MKVDEEKAGVKKLD. Disordered regions lie at residues 1–92, 222–257, and 431–467; these read MKVD…TRSP, PIHR…STED, and PGQM…SGDE. The Cytoplasmic portion of the chain corresponds to 1–515; it reads MKVDEEKAGV…YDGFHLQSIS (515 aa). Positions 233–247 are enriched in low complexity; the sequence is SVSTTNRSSARSSSA. A compositionally biased stretch (gly residues) spans 437–464; that stretch reads SVGGGGASAGGGGSGGGAGGSGAGGVGS. Residues 516–536 form a helical membrane-spanning segment; sequence AVLFIYLGCITNAITFGGLLG. Residues 537 to 558 lie on the Extracellular side of the membrane; sequence DATDNYQGVMESFLGTAMAGSL. A helical membrane pass occupies residues 559–579; sequence FCLFSGQPLIILSSTGPILIF. Residues 580–600 lie on the Cytoplasmic side of the membrane; it reads EKLLFDFSKANGLDYMEFRLW. Residues 601 to 621 form a helical membrane-spanning segment; the sequence is IGLHSAIQCLILVATDASFII. Residues 622–631 are Extracellular-facing; the sequence is KYITRFTEEG. Residues 632 to 652 form a helical membrane-spanning segment; it reads FSTLISFIFIYDAIKKMIGAF. Topologically, residues 653–730 are cytoplasmic; that stretch reads KYYPINTDFK…GGRLLGSSCQ (78 aa). The chain crosses the membrane as a helical span at residues 731–751; it reads FVPDLALMSFILFFGTYSMTL. Topologically, residues 752–768 are extracellular; the sequence is TLKKFKFSRYFPTKVRT. A helical transmembrane segment spans residues 769–789; sequence LVADFSIVFSILLFCGIDACF. The Cytoplasmic portion of the chain corresponds to 790-819; that stretch reads GLQTPKLHVPSVIKPTRPDRGWFVAPFGKN. A helical transmembrane segment spans residues 820–840; that stretch reads PWWVYPASILPALLVTILIFM. Residues 841-865 are Extracellular-facing; sequence DQQITAVIVNRKENKLRKAAGYHLD. A helical transmembrane segment spans residues 866 to 886; the sequence is LFWVGILMALCSFTGLPWYVA. Topologically, residues 887–922 are cytoplasmic; the sequence is ATVISIAHIDSLKMETETSAPGEQPQFLGVREQRVT. The chain crosses the membrane as a helical span at residues 923-943; that stretch reads GVMVFILTGISVFLAPILKYI. The Extracellular portion of the chain corresponds to 944-945; that stretch reads PM. The helical transmembrane segment at 946 to 966 threads the bilayer; the sequence is PVLYGVFLYMGVASLNGIQFW. Over 967 to 987 the chain is Cytoplasmic; the sequence is ERCKLFLMPAKHQPDHAFLRH. A run of 2 helical transmembrane segments spans residues 988 to 1008 and 1009 to 1029; these read VPLR…ALLW and ILKS…LIIV. The Cytoplasmic segment spans residues 1030–1116; the sequence is RRLLDLIFSQ…KRSSSWSYSL (87 aa).

It belongs to the anion exchanger (TC 2.A.31) family.

The protein resides in the apical cell membrane. It localises to the basolateral cell membrane. It carries out the reaction 2 hydrogencarbonate(out) + Na(+)(out) = 2 hydrogencarbonate(in) + Na(+)(in). The enzyme catalyses 3 hydrogencarbonate(out) + Na(+)(out) = 3 hydrogencarbonate(in) + Na(+)(in). Mediates sodium- and bicarbonate-dependent electrogenic sodium bicarbonate cotransport, with a Na(+):HCO3(-) stoichiometry varying from 1:2 to 1:3. The sequence is that of Electrogenic sodium bicarbonate cotransporter 4 (Slc4a5) from Mus musculus (Mouse).